A 367-amino-acid polypeptide reads, in one-letter code: Glutamate 5-kinase (367 aa).

Lys-10 serves as a coordination point for ATP. Residues Ser-50, Asp-137, and Asn-149 each contribute to the substrate site. Residues 169-170 (TD) and 211-217 (TGGMGTK) contribute to the ATP site. Positions 275–353 (AGEITVDEGA…QQIDAILGYE (79 aa)) constitute a PUA domain.

The protein belongs to the glutamate 5-kinase family.

The protein resides in the cytoplasm. The catalysed reaction is L-glutamate + ATP = L-glutamyl 5-phosphate + ADP. It participates in amino-acid biosynthesis; L-proline biosynthesis; L-glutamate 5-semialdehyde from L-glutamate: step 1/2. In terms of biological role, catalyzes the transfer of a phosphate group to glutamate to form L-glutamate 5-phosphate. The chain is Glutamate 5-kinase from Citrobacter koseri (strain ATCC BAA-895 / CDC 4225-83 / SGSC4696).